The following is a 979-amino-acid chain: Ankycorbin (979 aa).

An N-acetylmethionine modification is found at Met-1. At Ser-11 the chain carries Phosphoserine. 7 ANK repeats span residues 18 to 51 (KNDDRLLQAVENGDAEKVASLLGKKGASATKHDS), 52 to 81 (EGKTAFHLAAAKGHVECLKVMVTHGVDVTA), 85 to 114 (SGHSALHVAAKNGHPECIRKLLQYKSPAEN), 118 to 147 (SGKTALHYAAAQGCLQAVQLLCEHKSPINL), 151 to 180 (DGNIPLLVAVQNGHSEACHFLLDHGADVNS), 184 to 213 (NGRTALMLACETGSSNTVDALIKKGADLSL), and 217 to 247 (LGHNALHYSKLSENAGIQNLLLSKISQDADL). Residues 247–259 (LKTPTKPKQHDQV) show a composition bias toward basic and acidic residues. The tract at residues 247 to 299 (LKTPTKPKQHDQVSKISSERSGTPKKRKAPPPPISPTQLSDVSSPRSITSTPL) is disordered. Thr-249 bears the Phosphothreonine mark. A Nuclear localization signal motif is present at residues 270–276 (PKKRKAP). Residues Ser-281, Ser-286, and Ser-293 each carry the phosphoserine modification. Residues 282–299 (PTQLSDVSSPRSITSTPL) are compositionally biased toward polar residues. A phosphothreonine mark is found at Thr-295 and Thr-297. Phosphoserine occurs at positions 300, 304, 318, 327, 329, 340, 341, and 358. Positions 349–374 (LVLLQAKVASLTLHNKELQDKLQAKS) form a coiled coil. 2 disordered regions span residues 392–429 (TQTDLAPSPGKASDIPSSDAKSSPPVEHPAGTSTTDND) and 446–467 (LESSEAEKKQLQDELQSQRTDT). Residues 430–943 (VIIRQLQDSL…CKKHHQEVIS (514 aa)) adopt a coiled-coil conformation. Residues 446–457 (LESSEAEKKQLQ) are compositionally biased toward basic and acidic residues. Polar residues predominate over residues 458-467 (DELQSQRTDT). Phosphoserine is present on residues Ser-513, Ser-516, Ser-667, Ser-694, and Ser-914.

Interacts with PALLD. Associates with actin. However, does not bind F-actin directly. As to expression, highly expressed in testis, where it localizes to seminiferous tubules (at protein level). Expressed in ganglion cell layer and in Muller cell fibers of the retina (at protein level). In small intestine highly expressed at the apical and lateral borders of absorptive epithelia (at protein level). In liver highly expressed along the bile canaliculi (at protein level).

It localises to the cytoplasm. Its subcellular location is the cytoskeleton. The protein localises to the stress fiber. It is found in the cell cortex. The protein resides in the cell junction. It localises to the nucleus. Functionally, plays a role in actin regulation at the ectoplasmic specialization, a type of cell junction specific to testis. Important for establishment of sperm polarity and normal spermatid adhesion. May also promote integrity of Sertoli cell tight junctions at the blood-testis barrier. The polypeptide is Ankycorbin (Rai14) (Mus musculus (Mouse)).